The following is a 422-amino-acid chain: Dihydroorotase (422 aa).

Zn(2+) contacts are provided by His-57 and His-59. Residues His-59 to Arg-61 and Asn-91 contribute to the substrate site. The Zn(2+) site is built by Asp-149, His-176, and His-229. Asn-275 is a substrate binding site. Asp-302 is a Zn(2+) binding site. Asp-302 is an active-site residue. Residues His-306 and Phe-320 to Gly-321 contribute to the substrate site.

Belongs to the metallo-dependent hydrolases superfamily. DHOase family. Class I DHOase subfamily. Zn(2+) serves as cofactor.

It carries out the reaction (S)-dihydroorotate + H2O = N-carbamoyl-L-aspartate + H(+). Its pathway is pyrimidine metabolism; UMP biosynthesis via de novo pathway; (S)-dihydroorotate from bicarbonate: step 3/3. Catalyzes the reversible cyclization of carbamoyl aspartate to dihydroorotate. The chain is Dihydroorotase from Endomicrobium trichonymphae.